The following is a 577-amino-acid chain: Galectin-3-binding protein (577 aa).

Positions 1 to 18 (MALLWLLSVFLLVPGTQG) are cleaved as a signal peptide. The SRCR domain occupies 24–124 (MRLVNGASAN…HEKDAGVVCS (101 aa)). Disulfide bonds link C49/C113, C62/C123, and C93/C103. The N-linked (GlcNAc...) asparagine glycan is linked to N69. A glycan (N-linked (GlcNAc...) asparagine) is linked at N125. The BTB domain maps to 153–221 (CDLFIQVTGQ…FYSRRIEVSM (69 aa)). The BACK domain maps to 260 to 360 (PLDLYAYARA…MLPQELFELQ (101 aa)). N-linked (GlcNAc...) asparagine glycosylation is found at N362, N398, N543, and N572.

Homodimers and homomultimers. The multimers form ring-like structures with a diameter of 30-40 nm. Binds LGALS1 and LGALS3. Binds ITGB1, COL4A1, COL5A1, COL6A1, FN1 and NID. Interacts with PPIC (in vitro). The unglycosylated form interacts with PDE4DIP isoform 2/MMG8/SMYLE; this interaction may connect a pericentrosomal complex to the gamma-tubulin ring complex (gamma-TuRC) to promote microtubule assembly and acetylation. In terms of processing, N-glycosylated. As to expression, detected in embryo, liver, spleen, kidney, lung, heart, intestine, thymus and lymph node.

The protein resides in the secreted. It localises to the extracellular space. It is found in the extracellular matrix. In terms of biological role, promotes integrin-mediated cell adhesion. May stimulate host defense against viruses and tumor cells. The chain is Galectin-3-binding protein (Lgals3bp) from Mus musculus (Mouse).